We begin with the raw amino-acid sequence, 218 residues long: Glycerol-3-phosphate acyltransferase (218 aa).

Transmembrane regions (helical) follow at residues 5–25 (ALGM…ILIC), 53–73 (LAAA…VWLA), 80–100 (PFYL…PVFF), 115–135 (IAAI…LTVL), and 138–158 (GYSS…VWWF).

It belongs to the PlsY family. Probably interacts with PlsX.

Its subcellular location is the cell inner membrane. The enzyme catalyses an acyl phosphate + sn-glycerol 3-phosphate = a 1-acyl-sn-glycero-3-phosphate + phosphate. Its pathway is lipid metabolism; phospholipid metabolism. In terms of biological role, catalyzes the transfer of an acyl group from acyl-phosphate (acyl-PO(4)) to glycerol-3-phosphate (G3P) to form lysophosphatidic acid (LPA). This enzyme utilizes acyl-phosphate as fatty acyl donor, but not acyl-CoA or acyl-ACP. In Proteus mirabilis (strain HI4320), this protein is Glycerol-3-phosphate acyltransferase.